The following is a 75-amino-acid chain: UPF0512 protein D (75 aa).

Residues 1–20 (MAIFKSISSISNSTGSMGSS) form a disordered region.

This sequence belongs to the UPF0512 family.

This chain is UPF0512 protein D, found in Dictyostelium discoideum (Social amoeba).